The following is a 190-amino-acid chain: Molybdenum cofactor guanylyltransferase (190 aa).

Residues 10–12 (LAG), lysine 23, asparagine 51, aspartate 69, and aspartate 99 each bind GTP. Position 99 (aspartate 99) interacts with Mg(2+).

This sequence belongs to the MobA family. As to quaternary structure, monomer. The cofactor is Mg(2+).

Its subcellular location is the cytoplasm. The catalysed reaction is Mo-molybdopterin + GTP + H(+) = Mo-molybdopterin guanine dinucleotide + diphosphate. Its function is as follows. Transfers a GMP moiety from GTP to Mo-molybdopterin (Mo-MPT) cofactor (Moco or molybdenum cofactor) to form Mo-molybdopterin guanine dinucleotide (Mo-MGD) cofactor. This Mannheimia succiniciproducens (strain KCTC 0769BP / MBEL55E) protein is Molybdenum cofactor guanylyltransferase.